Reading from the N-terminus, the 147-residue chain is AP-2 complex subunit sigma (147 aa).

The protein belongs to the adaptor complexes small subunit family. Adaptor protein complex 2 (AP-2) is a heterotetramer composed of two large adaptins (alpha-type subunit APL3 and beta-type subunit APL1), a medium chain (mu-type subunit APM4) and a small adaptin (sigma-type subunit APS2). Interacts with APL1.

It localises to the cell membrane. Its subcellular location is the membrane. The protein resides in the coated pit. Its function is as follows. Component of the adaptor complexes which link clathrin to receptors in coated vesicles. Clathrin-associated protein complexes are believed to interact with the cytoplasmic tails of membrane proteins, leading to their selection and concentration. This chain is AP-2 complex subunit sigma (APS2), found in Saccharomyces cerevisiae (strain ATCC 204508 / S288c) (Baker's yeast).